A 46-amino-acid chain; its full sequence is Photosystem II reaction center protein K (46 aa).

A propeptide spanning residues 1-9 (MIDALVLVA) is cleaved from the precursor. Topologically, residues 10-19 (KLPEAYAIFD) are lumenal. A helical transmembrane segment spans residues 20-39 (PLVDVLPVIPVLFLALAFVW). At 40 to 46 (QAAVGFR) the chain is on the cytoplasmic side.

The protein belongs to the PsbK family. In terms of assembly, PSII is composed of 1 copy each of membrane proteins PsbA, PsbB, PsbC, PsbD, PsbE, PsbF, PsbH, PsbI, PsbJ, PsbK, PsbL, PsbM, PsbT, PsbX, PsbY, PsbZ, Psb30/Ycf12, peripheral proteins PsbO, CyanoQ(PsbQ), PsbU, PsbV and a large number of cofactors. It forms dimeric complexes. Part of a photosystem II (PSII) assembly intermediate complex PSII-I; crystallized from a strain deleted of psbJ, it forms monomeric PSII before addition of the oxygen evolving complex. PSII-I includes 3 assembly factors not found in mature PSII (Psb27, Psb28 and Psb34). Requires PSII binds multiple chlorophylls, carotenoids and specific lipids. as cofactor.

Its subcellular location is the cellular thylakoid membrane. Functionally, one of the components of the core complex of photosystem II (PSII). PSII is a light-driven water:plastoquinone oxidoreductase that uses light energy to abstract electrons from H(2)O, generating O(2) and a proton gradient subsequently used for ATP formation. It consists of a core antenna complex that captures photons, and an electron transfer chain that converts photonic excitation into a charge separation. Required for association of PsbZ and Psb30/Ycf12 with PSII. The chain is Photosystem II reaction center protein K from Thermosynechococcus vestitus (strain NIES-2133 / IAM M-273 / BP-1).